We begin with the raw amino-acid sequence, 682 residues long: Serine/threonine-protein kinase PLK2 (682 aa).

The interval 25-67 is disordered; the sequence is ACGGDSKKKRPQQPSEDGQPQAQVTPAAPHHHHHHSHSGPEIS. Residues 36-48 are compositionally biased toward polar residues; sequence QQPSEDGQPQAQV. Positions 79–331 constitute a Protein kinase domain; it reads YCRGKVLGKG…LDDIIRHDFF (253 aa). ATP-binding positions include 85–93 and Lys108; that span reads LGKGGFAKC. Catalysis depends on Asp202, which acts as the Proton acceptor. Thr236 is modified (phosphothreonine). Residues 403–432 are disordered; the sequence is SITQQPSKHRADEEPQPPPTTVARSGTSAV. 2 POLO box domains span residues 500–578 and 598–682; these read WVTK…YMEE and YLLQ…QRCN.

The protein belongs to the protein kinase superfamily. Ser/Thr protein kinase family. CDC5/Polo subfamily. Interacts with NSF; causing NSF dissociation from GRIA2. Interacts with CIB1. Catalytic activity is enhanced by phosphorylation of Thr-236. As to expression, brain, lung and heart.

Its subcellular location is the cytoplasm. It is found in the cytoskeleton. The protein localises to the microtubule organizing center. It localises to the centrosome. The protein resides in the centriole. Its subcellular location is the cell projection. It is found in the dendrite. It carries out the reaction L-seryl-[protein] + ATP = O-phospho-L-seryl-[protein] + ADP + H(+). It catalyses the reaction L-threonyl-[protein] + ATP = O-phospho-L-threonyl-[protein] + ADP + H(+). With respect to regulation, activated by phosphorylation of Thr-236. Once activated, activity is stimulated by binding target proteins. Its function is as follows. Tumor suppressor serine/threonine-protein kinase involved in synaptic plasticity, centriole duplication and G1/S phase transition. Polo-like kinases act by binding and phosphorylating proteins that are already phosphorylated on a specific motif recognized by the POLO box domains. Phosphorylates CPAP, NPM1, RAPGEF2, RASGRF1, SNCA, SIPA1L1 and SYNGAP1. Plays a key role in synaptic plasticity and memory by regulating the Ras and Rap protein signaling: required for overactivity-dependent spine remodeling by phosphorylating the Ras activator RASGRF1 and the Rap inhibitor SIPA1L1 leading to their degradation by the proteasome. Conversely, phosphorylates the Rap activator RAPGEF2 and the Ras inhibitor SYNGAP1, promoting their activity. Also regulates synaptic plasticity independently of kinase activity, via its interaction with NSF that disrupts the interaction between NSF and the GRIA2 subunit of AMPARs, leading to a rapid rundown of AMPAR-mediated current that occludes long term depression. Required for procentriole formation and centriole duplication by phosphorylating CPAP and NPM1, respectively. Its induction by p53/TP53 suggests that it may participate in the mitotic checkpoint following stress. The chain is Serine/threonine-protein kinase PLK2 (Plk2) from Mus musculus (Mouse).